Reading from the N-terminus, the 154-residue chain is NADPH-dependent 7-cyano-7-deazaguanine reductase (154 aa).

Positions 1–23 (MPNTDVSSLSMLGQQTETAQSPE) are enriched in polar residues. Residues 1-26 (MPNTDVSSLSMLGQQTETAQSPEQAV) form a disordered region. Cysteine 52 serves as the catalytic Thioimide intermediate. Aspartate 59 functions as the Proton donor in the catalytic mechanism. Residues 74–76 (VES) and 93–94 (HE) contribute to the substrate site.

The protein belongs to the GTP cyclohydrolase I family. QueF type 1 subfamily.

The protein localises to the cytoplasm. The enzyme catalyses 7-aminomethyl-7-carbaguanine + 2 NADP(+) = 7-cyano-7-deazaguanine + 2 NADPH + 3 H(+). It participates in tRNA modification; tRNA-queuosine biosynthesis. Its function is as follows. Catalyzes the NADPH-dependent reduction of 7-cyano-7-deazaguanine (preQ0) to 7-aminomethyl-7-deazaguanine (preQ1). In Rhizobium leguminosarum bv. trifolii (strain WSM2304), this protein is NADPH-dependent 7-cyano-7-deazaguanine reductase.